A 919-amino-acid chain; its full sequence is Kinesin-like protein KIN-UA (919 aa).

The segment at 1 to 68 (MSTTSGTGGV…SGGGGDAGVP (68 aa)) is disordered. Low complexity predominate over residues 15–51 (GTQRSSLRTQSSASTSSGGQKASVKSKSVLRKSSPAA). Over residues 52–66 (LGGGSSKSGGGGDAG) the composition is skewed to gly residues. A Kinesin motor domain is found at 70–412 (RVRVAVRLRP…IMFGQRAMKV (343 aa)). 155-162 (GQTGTGKT) serves as a coordination point for ATP. Residues 286–305 (TRDGLSSESNGNSHMTKSLK) are disordered. Residues 291 to 301 (SSESNGNSHMT) are compositionally biased toward polar residues. A D-BOX motif is present at residues 382–390 (RTSLVITIG). Coiled coils occupy residues 428–492 (SRRL…SIKK) and 530–621 (ALEE…LEQH). 4 ARM repeats span residues 650-689 (KPPV…NLAA), 691-731 (EANQ…NLAM), 733-773 (ETNQ…NLCG), and 775-814 (DKLQ…NFAK).

Belongs to the TRAFAC class myosin-kinesin ATPase superfamily. Kinesin family. Ungrouped subfamily. Interacts (via C-terminus) with NEK5. In terms of tissue distribution, expressed in leaves, guard cells, trichomes, vascular tissues, stele of the root tip region and columella cells. Highest expression detected in guard cells.

It localises to the cytoplasm. The protein localises to the cytoskeleton. This is Kinesin-like protein KIN-UA from Arabidopsis thaliana (Mouse-ear cress).